A 91-amino-acid polypeptide reads, in one-letter code: Late embryogenesis abundant protein EMB564 (91 aa).

Basic and acidic residues-rich tracts occupy residues 1–19 (MASG…REGE) and 32–51 (EAQE…RREQ). Residues 1–91 (MASGQESRKE…VTIDESKFTK (91 aa)) form a disordered region.

This sequence belongs to the small hydrophilic plant seed protein family.

Its function is as follows. LEA proteins are late embryonic proteins abundant in higher plant seed embryos. They may play an essential role in seed survival and in controlling water exchanges during seed desiccation and imbibition. The sequence is that of Late embryogenesis abundant protein EMB564 from Zea mays (Maize).